A 305-amino-acid polypeptide reads, in one-letter code: Ribonucleoside-diphosphate reductase small subunit (305 aa).

Residues E64, E94, and H97 each coordinate Fe cation. The active site involves Y101. The helical transmembrane segment at 150 to 170 (VLVFLLIEGIFFISSFYSIAT) threads the bilayer. Fe cation is bound by residues E157, E191, and H194.

Belongs to the ribonucleoside diphosphate reductase small chain family. As to quaternary structure, heterotetramer composed of a homodimer of the large subunit (R1) and a homodimer of the small subunit (R2). Larger multisubunit protein complex are also active, composed of (R1)n(R2)n. It depends on Fe cation as a cofactor.

It localises to the host membrane. The enzyme catalyses a 2'-deoxyribonucleoside 5'-diphosphate + [thioredoxin]-disulfide + H2O = a ribonucleoside 5'-diphosphate + [thioredoxin]-dithiol. Its function is as follows. Ribonucleoside-diphosphate reductase holoenzyme provides the precursors necessary for viral DNA synthesis. Allows virus growth in non-dividing cells, as well as reactivation from latency in infected hosts. Catalyzes the biosynthesis of deoxyribonucleotides from the corresponding ribonucleotides. The chain is Ribonucleoside-diphosphate reductase small subunit from Equus caballus (Horse).